Reading from the N-terminus, the 228-residue chain is Secreted LysM effector ECP6 (228 aa).

The signal sequence occupies residues 1–18 (MQSMILFAAALMGAAVNG). Disulfide bonds link Cys-36-Cys-90, Cys-64-Cys-98, Cys-109-Cys-163, and Cys-168-Cys-220. Positions 42–86 (IKYTVVKGDTLTSIAKKFKSGICNIVSVNKLANPNLIELGATLII) constitute a LysM 1 domain. The chitin site is built by Thr-51, Thr-53, Asn-76, and Ile-78. N-linked (GlcNAc...) asparagine glycans are attached at residues Asn-89, Asn-95, Asn-127, and Asn-133. 2 LysM domains span residues 115–160 (GSYT…IITV) and 172–216 (GTYN…QIIL). Chitin-binding residues include Gly-179, Leu-181, Val-183, Pro-205, Ser-206, and Leu-208. Asn-222 carries an N-linked (GlcNAc...) asparagine glycan.

It belongs to the secreted LysM effector family. As to quaternary structure, forms homodimers.

It localises to the secreted. In terms of biological role, secreted effector that enables the plant pathogenic fungus to manipulate host defenses for successful infection. Binds chitine, but not to any other glycan, including the N-linked glycan chitobiose. Outcompetes host immune receptor for chitin binding through intrachain LysM dimerization. During infection, sequesters chitin oligosaccharides that are released from the cell walls of invading hyphae to prevent elicitation of host immunity. In Passalora fulva (Tomato leaf mold), this protein is Secreted LysM effector ECP6.